Consider the following 426-residue polypeptide: Glutamate-1-semialdehyde 2,1-aminomutase (426 aa).

Lys265 bears the N6-(pyridoxal phosphate)lysine mark.

It belongs to the class-III pyridoxal-phosphate-dependent aminotransferase family. HemL subfamily. Homodimer. It depends on pyridoxal 5'-phosphate as a cofactor.

The protein resides in the cytoplasm. The catalysed reaction is (S)-4-amino-5-oxopentanoate = 5-aminolevulinate. It participates in porphyrin-containing compound metabolism; protoporphyrin-IX biosynthesis; 5-aminolevulinate from L-glutamyl-tRNA(Glu): step 2/2. This Yersinia pseudotuberculosis serotype O:1b (strain IP 31758) protein is Glutamate-1-semialdehyde 2,1-aminomutase.